A 233-amino-acid polypeptide reads, in one-letter code: Large ribosomal subunit protein uL1 (233 aa).

Belongs to the universal ribosomal protein uL1 family. In terms of assembly, part of the 50S ribosomal subunit.

In terms of biological role, binds directly to 23S rRNA. The L1 stalk is quite mobile in the ribosome, and is involved in E site tRNA release. Functionally, protein L1 is also a translational repressor protein, it controls the translation of the L11 operon by binding to its mRNA. In Geobacillus kaustophilus (strain HTA426), this protein is Large ribosomal subunit protein uL1.